A 429-amino-acid polypeptide reads, in one-letter code: Adenylosuccinate synthetase (429 aa).

GTP is bound by residues 12–18 (GDEGKGK) and 40–42 (GHT). Catalysis depends on aspartate 13, which acts as the Proton acceptor. Residues aspartate 13 and glycine 40 each contribute to the Mg(2+) site. IMP contacts are provided by residues 13 to 16 (DEGK), 38 to 41 (NAGH), threonine 129, arginine 143, glutamine 224, threonine 239, and arginine 303. Residue histidine 41 is the Proton donor of the active site. 299–305 (ATTGRRR) is a binding site for substrate. Residues arginine 305, 331-333 (KLD), and 413-415 (SVG) contribute to the GTP site.

Belongs to the adenylosuccinate synthetase family. In terms of assembly, homodimer. Mg(2+) is required as a cofactor.

It localises to the cytoplasm. The enzyme catalyses IMP + L-aspartate + GTP = N(6)-(1,2-dicarboxyethyl)-AMP + GDP + phosphate + 2 H(+). It participates in purine metabolism; AMP biosynthesis via de novo pathway; AMP from IMP: step 1/2. Functionally, plays an important role in the de novo pathway of purine nucleotide biosynthesis. Catalyzes the first committed step in the biosynthesis of AMP from IMP. This chain is Adenylosuccinate synthetase, found in Desulforapulum autotrophicum (strain ATCC 43914 / DSM 3382 / VKM B-1955 / HRM2) (Desulfobacterium autotrophicum).